Reading from the N-terminus, the 365-residue chain is 4-hydroxy-3-methylbut-2-en-1-yl diphosphate synthase (flavodoxin) (365 aa).

[4Fe-4S] cluster contacts are provided by Cys-270, Cys-273, Cys-305, and Glu-312.

Belongs to the IspG family. [4Fe-4S] cluster is required as a cofactor.

It catalyses the reaction (2E)-4-hydroxy-3-methylbut-2-enyl diphosphate + 2 oxidized [2Fe-2S]-[ferredoxin] + H2O = 2-C-methyl-D-erythritol 2,4-cyclic diphosphate + 2 reduced [2Fe-2S]-[ferredoxin] + H(+). It carries out the reaction (2E)-4-hydroxy-3-methylbut-2-enyl diphosphate + oxidized [flavodoxin] + H2O + 2 H(+) = 2-C-methyl-D-erythritol 2,4-cyclic diphosphate + reduced [flavodoxin]. It functions in the pathway isoprenoid biosynthesis; isopentenyl diphosphate biosynthesis via DXP pathway; isopentenyl diphosphate from 1-deoxy-D-xylulose 5-phosphate: step 5/6. Converts 2C-methyl-D-erythritol 2,4-cyclodiphosphate (ME-2,4cPP) into 1-hydroxy-2-methyl-2-(E)-butenyl 4-diphosphate. Involved in density-dependent regulation of 2'-N-acetyltransferase. The chain is 4-hydroxy-3-methylbut-2-en-1-yl diphosphate synthase (flavodoxin) from Providencia stuartii.